Here is a 183-residue protein sequence, read N- to C-terminus: Beta-defensin 129 (183 aa).

An N-terminal signal peptide occupies residues 1 to 19; that stretch reads MKLLFPVFASLMLQYQVNT. Disulfide bonds link cysteine 27–cysteine 53, cysteine 34–cysteine 48, and cysteine 38–cysteine 54. The segment at 141 to 183 is disordered; it reads TATSTKSNTKESRDSATASPPPAPPPPNILPTPSLELEKAEEQ. Residues 159–170 are compositionally biased toward pro residues; the sequence is SPPPAPPPPNIL.

The protein belongs to the beta-defensin family.

It is found in the secreted. Its function is as follows. Has antibacterial activity. In Pongo pygmaeus (Bornean orangutan), this protein is Beta-defensin 129 (DEFB129).